The following is a 216-amino-acid chain: Thymidylate kinase (216 aa).

Residue 9–16 coordinates ATP; it reads GIEGSGKT.

The protein belongs to the thymidylate kinase family.

It carries out the reaction dTMP + ATP = dTDP + ADP. Phosphorylation of dTMP to form dTDP in both de novo and salvage pathways of dTTP synthesis. This chain is Thymidylate kinase, found in Syntrophotalea carbinolica (strain DSM 2380 / NBRC 103641 / GraBd1) (Pelobacter carbinolicus).